Here is a 196-residue protein sequence, read N- to C-terminus: Peptidyl-tRNA hydrolase (196 aa).

Tyr-17 lines the tRNA pocket. His-22 (proton acceptor) is an active-site residue. Residues Phe-68, Asn-70, and Asn-116 each coordinate tRNA.

The protein belongs to the PTH family. As to quaternary structure, monomer.

The protein resides in the cytoplasm. It catalyses the reaction an N-acyl-L-alpha-aminoacyl-tRNA + H2O = an N-acyl-L-amino acid + a tRNA + H(+). Hydrolyzes ribosome-free peptidyl-tRNAs (with 1 or more amino acids incorporated), which drop off the ribosome during protein synthesis, or as a result of ribosome stalling. Functionally, catalyzes the release of premature peptidyl moieties from peptidyl-tRNA molecules trapped in stalled 50S ribosomal subunits, and thus maintains levels of free tRNAs and 50S ribosomes. This Yersinia pseudotuberculosis serotype O:1b (strain IP 31758) protein is Peptidyl-tRNA hydrolase.